The following is a 1163-amino-acid chain: Protein phosphatase 1 regulatory subunit 26 (1163 aa).

The span at 65–83 (HERLTQRGQRAERSRDTRL) shows a compositional bias: basic and acidic residues. Disordered stretches follow at residues 65–91 (HERL…AVCK), 144–253 (RGGA…TSAR), 266–393 (RKPP…KKKL), 463–496 (APME…NIDS), 514–653 (VGSP…DEDL), 672–929 (RDPR…TATA), and 1073–1163 (TQPG…GLKL). 2 stretches are compositionally biased toward polar residues: residues 163–179 (HSST…TPGS) and 189–201 (DQGS…MSSE). The segment covering 208 to 236 (IRAEIEQFLNEKRQHENPKCDGFVDKKSD) has biased composition (basic and acidic residues). A compositionally biased stretch (polar residues) spans 273 to 297 (KMSTQQRNFQPKPTTEPETPVSTKL). Residues 315–324 (MPARRSKRIR) are compositionally biased toward basic residues. Low complexity predominate over residues 515-535 (GSPQPAQGPLSSPGPSGQPGI). Composition is skewed to basic and acidic residues over residues 566–581 (KIRE…DHIQ) and 634–645 (ATEKESSEDKSS). Positions 672–682 (RDPRASCKKVR) are enriched in basic residues. Residues 766 to 780 (TGASGHPPSASSPTS) show a composition bias toward low complexity. Over residues 783-792 (SAVDSDDSIE) the composition is skewed to acidic residues. Composition is skewed to basic and acidic residues over residues 793–808 (LEIR…ESIR) and 850–859 (EGRRGPERAR). Residues 860-871 (TQATGLLSQSGK) show a composition bias toward polar residues. Residues 901–910 (SSAKASPPSR) show a composition bias toward low complexity. Over residues 1105–1131 (QQDRRNSASEDKVLDLRYRHRVDREPQ) the composition is skewed to basic and acidic residues. Position 1111 is a phosphoserine (serine 1111). 2 stretches are compositionally biased toward polar residues: residues 1133–1146 (QETL…FSDT) and 1154–1163 (ATVSSKGLKL).

In terms of assembly, interacts with UTP20 and PPP1CA.

The protein resides in the nucleus. It localises to the nucleolus. In terms of biological role, inhibits phosphatase activity of protein phosphatase 1 (PP1) complexes. May positively regulate cell proliferation. This is Protein phosphatase 1 regulatory subunit 26 (Ppp1r26) from Mus musculus (Mouse).